The chain runs to 623 residues: Frizzled and smoothened-like protein M (623 aa).

Positions 1-18 are cleaved as a signal peptide; sequence MKSIFIIIFILYVFQVNS. At 19 to 243 the chain is on the extracellular side; that stretch reads QTIYPIDPSG…WDQLYNLSNT (225 aa). Residues 25 to 163 enclose the FZ domain; it reads DPSGKCEQYI…NYSEFNLTNY (139 aa). 2 cysteine pairs are disulfide-bonded: C30–C100 and C42–C93. N57, N106, N109, N154, N159, N169, N199, and N239 each carry an N-linked (GlcNAc...) asparagine glycan. The chain crosses the membrane as a helical span at residues 244 to 264; that stretch reads LAVLSTFGSLYLLVTFIILNP. At 265 to 273 the chain is on the cytoplasmic side; sequence KVTSFDRMY. The chain crosses the membrane as a helical span at residues 274-294; the sequence is GFFNGSVFMMSLSGVILFIAG. Residues 295-317 are Extracellular-facing; the sequence is GPRALIKDGGARISVFEDPLCSS. A helical membrane pass occupies residues 318–338; sequence TGFIFQLFAINAILFWAYMGF. Topologically, residues 339-354 are cytoplasmic; that stretch reads DLWWRVKYITKPLNIQ. A helical membrane pass occupies residues 355-375; sequence KYYVPIAFTISFIFSVIPLAT. Residues 376–397 are Extracellular-facing; the sequence is KNYRMVRGNIHCWVHKAVLQNT. The chain crosses the membrane as a helical span at residues 398–418; sequence LFFGPLGLTLTISTGFIGLVI. Residues 419-439 are Cytoplasmic-facing; sequence YEIYKIVKATGRGGIMKLEIK. The helical transmembrane segment at 440–460 threads the bilayer; the sequence is PILNIVLIYFSFVYIFAFNFH. The Extracellular portion of the chain corresponds to 461–494; sequence NDNNSKNTYGSIDEFFQCTLESDDPSKCTVGGPS. The N-linked (GlcNAc...) asparagine glycan is linked to N463. The chain crosses the membrane as a helical span at residues 495–515; the sequence is IGSLGYFIYCIRIYGIYCFFL. The Cytoplasmic portion of the chain corresponds to 516-623; the sequence is QGLNERAFKI…DIEIGSVNIK (108 aa). The segment at 552–590 is disordered; that stretch reads PSESGNSSTTAGTSTTINNSNINKKNNNSKPTLSTMDSN. Residues 555–580 show a composition bias toward low complexity; it reads SGNSSTTAGTSTTINNSNINKKNNNS.

The protein belongs to the G-protein coupled receptor Fz/Smo family.

It localises to the membrane. This is Frizzled and smoothened-like protein M (fslM-1) from Dictyostelium discoideum (Social amoeba).